The following is an 841-amino-acid chain: Potassium transport protein 1 (841 aa).

The next 2 helical transmembrane spans lie at 24-44 and 80-100; these read YIYI…GGTT and ILYG…ISFI. N-linked (GlcNAc...) asparagine glycosylation is found at Asn116 and Asn164. A disordered region spans residues 173–192; the sequence is STNNPYFPDNPPSPKADISK. 2 N-linked (GlcNAc...) asparagine glycosylation sites follow: Asn215 and Asn401. Helical transmembrane passes span 469 to 489, 507 to 527, 537 to 557, 600 to 620, 662 to 682, 715 to 735, and 747 to 767; these read MVTL…IVFA, GWWA…SLIP, IFLL…FPCF, WVLF…FMVL, AVLV…AINM, LSYD…CEGG, and IFTV…STGL. An N-linked (GlcNAc...) asparagine glycan is attached at Asn771.

Belongs to the TrkH potassium transport family.

Its subcellular location is the cell membrane. In terms of biological role, together with TRK2, defines the major, high-affinity potassium influx transport system. Involved in maintenance of the proper sodium/potassium ratio in the cell and in regulating the plasma membrane potential. The sequence is that of Potassium transport protein 1 (trk1) from Schizosaccharomyces pombe (strain 972 / ATCC 24843) (Fission yeast).